Here is an 820-residue protein sequence, read N- to C-terminus: MSDTRRRVKVYTLNEDRQWDDRGTGHVSSTYVERLKGMSLLVRAESDGSLLLESKINPNTAYQKQQDTLIVWSEAENYDLALSFQEKAGCDEIWEKICQVQGKDPSVEVTQDPIDESEEERFEEMPETSNLIDLPTCELSKLEEIADLVTSVLSSPIRREKLALALENEGYIKKLLQLFQTCENLDNTEGLHHLYEIIRGILFLNKAALFEVMFSDECIMDVVGCLEYDPALAQPKRHREFLTKTAKFKEVIPITDSELRQKIHQTYRVQYIQDVILPTPSVFEENFLSTLTSFIFFNKVEIVSMLQEDEKFLSEVFAQLTDEATDDDKRRELVNFFKEFCAFSQTLQPQNRDAFFKTLANLGILPALEIVMGMDDLQVRAAATDIFSYLVEFSPSMVREFVMQEAQQSDDDILLINVVIEQMICDSDPELGGAVQLMGLLRTLIDPENMLATANKTEKSEFLNFFYNHCMHVLTAPLLANTSEDKLEKDAVLGSIKTSTVCPDNYQTAQLLALILELLTFCVEHHTYHIKNYIMNKDLLRRVLILMNSKHTFLALCALRFMRRIIGLKDEFYNRYIIKGNLFEPVINALLDNGTRYNLLNSAIIELFEFIRVEDIKSLTSHIVENFYKALESIEYVQTFKGLKTRYEQEKDRQSQKLSSVPSILRSNRFRRDARALEDDEELWFNEDEEEEGEAVVPPVEKTKTEDDFPEGYEKFLETKKAKELEDKENLPKRTSVGGFKFTFSHSVSAANGANSTNSKSVAAHTPPASSNGSSSKNTSLTTTVASAKGSLIGLVDYPDDEDEEEEEDTSPRKRPRLGS.

Positions 1–100 (MSDTRRRVKV…DEIWEKICQV (100 aa)) constitute a WH1 domain. 2 disordered regions span residues 687–711 (EDEEEEGEAVVPPVEKTKTEDDFPE) and 750–820 (AANG…RLGS). Residues 701 to 711 (EKTKTEDDFPE) are compositionally biased toward basic and acidic residues. Residues 750–761 (AANGANSTNSKS) show a composition bias toward polar residues. The segment covering 770–784 (SSNGSSSKNTSLTTT) has biased composition (low complexity). The segment covering 798–809 (YPDDEDEEEEED) has biased composition (acidic residues).

It belongs to the SMEK family. As to quaternary structure, serine/threonine-protein phosphatase 4 (PP4) occurs in different assemblies of the catalytic and one or more regulatory subunits.

In terms of biological role, regulatory subunit of serine/threonine-protein phosphatase 4 (PP4). This is Serine/threonine-protein phosphatase 4 regulatory subunit 3 from Xenopus tropicalis (Western clawed frog).